A 258-amino-acid chain; its full sequence is Venom plasminogen activator GPV-PA (258 aa).

The signal sequence occupies residues 1 to 18 (MVLIRVLANLLILQLSYA). Residues 19-24 (QKSSEL) constitute a propeptide that is removed on maturation. The 225-residue stretch at 25–249 (VFGGRPCNIN…YTDWIQSIIA (225 aa)) folds into the Peptidase S1 domain. Disulfide bonds link cysteine 31–cysteine 163, cysteine 50–cysteine 66, cysteine 98–cysteine 256, cysteine 142–cysteine 210, cysteine 174–cysteine 189, and cysteine 200–cysteine 225. N-linked (GlcNAc...) asparagine glycosylation is present at asparagine 44. Residues histidine 65 and aspartate 110 each act as charge relay system in the active site. N-linked (GlcNAc...) asparagine glycans are attached at residues asparagine 121 and asparagine 185. The active-site Charge relay system is the serine 204.

This sequence belongs to the peptidase S1 family. Snake venom subfamily. In terms of assembly, monomer. In terms of tissue distribution, expressed by the venom gland.

It is found in the secreted. Functionally, snake venom serine protease that activates plasminogen. In Trimeresurus albolabris (White-lipped pit viper), this protein is Venom plasminogen activator GPV-PA.